We begin with the raw amino-acid sequence, 571 residues long: Proline--tRNA ligase (571 aa).

It belongs to the class-II aminoacyl-tRNA synthetase family. ProS type 1 subfamily. As to quaternary structure, homodimer.

Its subcellular location is the cytoplasm. It carries out the reaction tRNA(Pro) + L-proline + ATP = L-prolyl-tRNA(Pro) + AMP + diphosphate. In terms of biological role, catalyzes the attachment of proline to tRNA(Pro) in a two-step reaction: proline is first activated by ATP to form Pro-AMP and then transferred to the acceptor end of tRNA(Pro). As ProRS can inadvertently accommodate and process non-cognate amino acids such as alanine and cysteine, to avoid such errors it has two additional distinct editing activities against alanine. One activity is designated as 'pretransfer' editing and involves the tRNA(Pro)-independent hydrolysis of activated Ala-AMP. The other activity is designated 'posttransfer' editing and involves deacylation of mischarged Ala-tRNA(Pro). The misacylated Cys-tRNA(Pro) is not edited by ProRS. In Vibrio cholerae serotype O1 (strain ATCC 39541 / Classical Ogawa 395 / O395), this protein is Proline--tRNA ligase.